We begin with the raw amino-acid sequence, 453 residues long: Ribosomal protein uS12 methylthiotransferase RimO (453 aa).

The region spanning 5-120 (PKVGFVSLGC…VMQAVHSHLP (116 aa)) is the MTTase N-terminal domain. The [4Fe-4S] cluster site is built by C14, C50, C79, C151, C155, and C158. Residues 137 to 382 (LTPRHYAYLK…MEVAEEVSAR (246 aa)) enclose the Radical SAM core domain. The TRAM domain occupies 385 to 453 (ARKVGKTLKV…ADGHDLWGEV (69 aa)).

This sequence belongs to the methylthiotransferase family. RimO subfamily. [4Fe-4S] cluster is required as a cofactor.

The protein resides in the cytoplasm. It catalyses the reaction L-aspartate(89)-[ribosomal protein uS12]-hydrogen + (sulfur carrier)-SH + AH2 + 2 S-adenosyl-L-methionine = 3-methylsulfanyl-L-aspartate(89)-[ribosomal protein uS12]-hydrogen + (sulfur carrier)-H + 5'-deoxyadenosine + L-methionine + A + S-adenosyl-L-homocysteine + 2 H(+). Its function is as follows. Catalyzes the methylthiolation of an aspartic acid residue of ribosomal protein uS12. This chain is Ribosomal protein uS12 methylthiotransferase RimO, found in Burkholderia multivorans (strain ATCC 17616 / 249).